The primary structure comprises 208 residues: Protein-methionine-sulfoxide reductase heme-binding subunit MsrQ (208 aa).

6 helical membrane passes run 16–36 (IAVF…FVGG), 53–73 (WGLI…LWGW), 82–102 (MVGL…IGLD), 118–138 (TYIT…VTST), 156–176 (LVYP…KADL), and 178–198 (EPLI…VPAV).

Belongs to the MsrQ family. In terms of assembly, heterodimer of a catalytic subunit (MsrP) and a heme-binding subunit (MsrQ). FMN serves as cofactor. Requires heme b as cofactor.

Its subcellular location is the cell inner membrane. Part of the MsrPQ system that repairs oxidized periplasmic proteins containing methionine sulfoxide residues (Met-O), using respiratory chain electrons. Thus protects these proteins from oxidative-stress damage caused by reactive species of oxygen and chlorine generated by the host defense mechanisms. MsrPQ is essential for the maintenance of envelope integrity under bleach stress, rescuing a wide series of structurally unrelated periplasmic proteins from methionine oxidation. MsrQ provides electrons for reduction to the reductase catalytic subunit MsrP, using the quinone pool of the respiratory chain. This is Protein-methionine-sulfoxide reductase heme-binding subunit MsrQ from Rhodospirillum rubrum (strain ATCC 11170 / ATH 1.1.1 / DSM 467 / LMG 4362 / NCIMB 8255 / S1).